The following is a 370-amino-acid chain: Histidinol-phosphate aminotransferase (370 aa).

Lys230 carries the post-translational modification N6-(pyridoxal phosphate)lysine.

This sequence belongs to the class-II pyridoxal-phosphate-dependent aminotransferase family. Histidinol-phosphate aminotransferase subfamily. In terms of assembly, homodimer. The cofactor is pyridoxal 5'-phosphate.

It catalyses the reaction L-histidinol phosphate + 2-oxoglutarate = 3-(imidazol-4-yl)-2-oxopropyl phosphate + L-glutamate. Its pathway is amino-acid biosynthesis; L-histidine biosynthesis; L-histidine from 5-phospho-alpha-D-ribose 1-diphosphate: step 7/9. This Leptospira interrogans serogroup Icterohaemorrhagiae serovar Lai (strain 56601) protein is Histidinol-phosphate aminotransferase.